The sequence spans 424 residues: Putative chloroquine resistance transporter (424 aa).

The Cytoplasmic portion of the chain corresponds to 1-56 (MTVIKKGKNKKKNLKNDDRYKELDSLITNGSEIGDNSGRSCIKRFFKIIGNEMKNN). Residues 57–77 (VYVYFLSILYLCVCVMNKVFA) form a helical membrane-spanning segment. The Vacuolar segment spans residues 78-88 (KRTLNKMGNYS). Asn-86 carries an N-linked (GlcNAc...) asparagine glycan. Residues 89–109 (FVTSETHNIICIVVFQLLYFI) form a helical membrane-spanning segment. At 110-125 (YRKTSTSGYKNESQKN) the chain is on the cytoplasmic side. Residues 126-146 (FGWQFFLISLLDASTVIISMI) form a helical membrane-spanning segment. The Vacuolar portion of the chain corresponds to 147–156 (GLTRTTGNIQ). Residues 157–177 (SFIMQLIIPVNMYFCFMFLGY) traverse the membrane as a helical segment. The Cytoplasmic portion of the chain corresponds to 178 to 180 (RYH). Residues 181–201 (LFNYLGAFIILITIAVVETFL) traverse the membrane as a helical segment. The Vacuolar portion of the chain corresponds to 202-209 (SFETQSEN). A helical transmembrane segment spans residues 210 to 230 (SIIFNLIMISALIPLSFSNMT). Topologically, residues 231-248 (REVVFKKHKINILRLNAM) are cytoplasmic. A helical transmembrane segment spans residues 249–269 (VVLFQFFTSLLVLPVYNIPFL). Topologically, residues 270-317 (KEIYMPFSEMSTNINNGLRCLFYGQNTVVENCGVGMVKMCDNCEGAWK) are vacuolar. 2 disulfides stabilise this stretch: Cys-289-Cys-312 and Cys-301-Cys-309. A helical membrane pass occupies residues 318 to 338 (TFITFSFFNICDNLLACYIID). Residues 339 to 346 (KFSTMTYT) lie on the Cytoplasmic side of the membrane. The helical transmembrane segment at 347-367 (IVSCIQGPAITIAYYFKFLAG) threads the bilayer. Topologically, residues 368 to 377 (DAVRKPRILD) are vacuolar. A helical membrane pass occupies residues 378 to 398 (FLTLFGYLFGTIIYRIGNIIL). Over 399-424 (EKKKMVKSQNSNDSEAELTCIETSTA) the chain is Cytoplasmic.

The protein belongs to the CRT-like transporter family.

The protein localises to the vacuole membrane. Nutrient transporter. Involved in maintaining the osmotic homeostasis of the digestive vacuole. This is Putative chloroquine resistance transporter from Plasmodium yoelii yoelii.